The sequence spans 460 residues: ATP synthase subunit beta (460 aa).

Residue 150–157 (GGAGVGKT) participates in ATP binding.

The protein belongs to the ATPase alpha/beta chains family. As to quaternary structure, F-type ATPases have 2 components, CF(1) - the catalytic core - and CF(0) - the membrane proton channel. CF(1) has five subunits: alpha(3), beta(3), gamma(1), delta(1), epsilon(1). CF(0) has three main subunits: a(1), b(2) and c(9-12). The alpha and beta chains form an alternating ring which encloses part of the gamma chain. CF(1) is attached to CF(0) by a central stalk formed by the gamma and epsilon chains, while a peripheral stalk is formed by the delta and b chains.

The protein localises to the cell inner membrane. The enzyme catalyses ATP + H2O + 4 H(+)(in) = ADP + phosphate + 5 H(+)(out). Functionally, produces ATP from ADP in the presence of a proton gradient across the membrane. The catalytic sites are hosted primarily by the beta subunits. The chain is ATP synthase subunit beta from Sodalis glossinidius (strain morsitans).